The following is a 239-amino-acid chain: Ribosomal RNA small subunit methyltransferase G (239 aa).

S-adenosyl-L-methionine-binding positions include Gly-78, Phe-83, 129–130 (AE), and Arg-148.

The protein belongs to the methyltransferase superfamily. RNA methyltransferase RsmG family.

Its subcellular location is the cytoplasm. Functionally, specifically methylates the N7 position of a guanine in 16S rRNA. In Clostridium botulinum (strain Eklund 17B / Type B), this protein is Ribosomal RNA small subunit methyltransferase G.